A 61-amino-acid polypeptide reads, in one-letter code: Metallothionein-1M (61 aa).

Positions 1-29 (MDPNCSCTTGVSCACTGSCTCKECKCTSC) are beta. Residues Cys5, Cys7, Cys13, Cys15, Cys19, Cys21, Cys24, Cys26, Cys29, Cys33, Cys34, Cys36, Cys37, Cys41, Cys44, Cys48, Cys50, Cys57, Cys59, and Cys60 each contribute to the a divalent metal cation site. The segment at 30–61 (KKSCCSCCPVGCAKCAHGCVCKGTLENCSCCA) is alpha.

Belongs to the metallothionein superfamily. Type 1 family. Monomer.

Functionally, metallothioneins have a high content of cysteine residues that bind various heavy metals; these proteins are transcriptionally regulated by both heavy metals and glucocorticoids. The protein is Metallothionein-1M (MT1M) of Homo sapiens (Human).